Consider the following 429-residue polypeptide: Adenylosuccinate synthetase (429 aa).

GTP-binding positions include G11–K17 and G39–T41. D12 acts as the Proton acceptor in catalysis. Positions 12 and 39 each coordinate Mg(2+). Residues D12–K15, N37–H40, T130, R144, N226, T241, and R305 contribute to the IMP site. Residue H40 is the Proton donor of the active site. Residue V301–R307 participates in substrate binding. GTP-binding positions include R307, K333–D335, and G415–G417.

This sequence belongs to the adenylosuccinate synthetase family. As to quaternary structure, homodimer. The cofactor is Mg(2+).

It localises to the cytoplasm. It carries out the reaction IMP + L-aspartate + GTP = N(6)-(1,2-dicarboxyethyl)-AMP + GDP + phosphate + 2 H(+). The protein operates within purine metabolism; AMP biosynthesis via de novo pathway; AMP from IMP: step 1/2. Functionally, plays an important role in the de novo pathway and in the salvage pathway of purine nucleotide biosynthesis. Catalyzes the first committed step in the biosynthesis of AMP from IMP. This Yarrowia lipolytica (strain CLIB 122 / E 150) (Yeast) protein is Adenylosuccinate synthetase.